Here is a 178-residue protein sequence, read N- to C-terminus: Large ribosomal subunit protein uL6 (178 aa).

Belongs to the universal ribosomal protein uL6 family. Part of the 50S ribosomal subunit.

This protein binds to the 23S rRNA, and is important in its secondary structure. It is located near the subunit interface in the base of the L7/L12 stalk, and near the tRNA binding site of the peptidyltransferase center. This is Large ribosomal subunit protein uL6 from Francisella tularensis subsp. tularensis (strain FSC 198).